A 250-amino-acid chain; its full sequence is Coproheme decarboxylase (250 aa).

Residues Arg-131, 145-149 (YPMNK), His-172, and Gln-185 each bind Fe-coproporphyrin III. Residue Tyr-145 is part of the active site.

The protein belongs to the ChdC family. Type 1 subfamily. It depends on Fe-coproporphyrin III as a cofactor.

It catalyses the reaction Fe-coproporphyrin III + 2 H2O2 + 2 H(+) = heme b + 2 CO2 + 4 H2O. The catalysed reaction is Fe-coproporphyrin III + H2O2 + H(+) = harderoheme III + CO2 + 2 H2O. The enzyme catalyses harderoheme III + H2O2 + H(+) = heme b + CO2 + 2 H2O. Its pathway is porphyrin-containing compound metabolism; protoheme biosynthesis. Functionally, involved in coproporphyrin-dependent heme b biosynthesis. Catalyzes the decarboxylation of Fe-coproporphyrin III (coproheme) to heme b (protoheme IX), the last step of the pathway. The reaction occurs in a stepwise manner with a three-propionate intermediate. The chain is Coproheme decarboxylase from Staphylococcus aureus (strain USA300 / TCH1516).